A 21-amino-acid polypeptide reads, in one-letter code: Fibrinogen beta chain (21 aa).

Q1 is subject to Pyrrolidone carboxylic acid. A Sulfotyrosine modification is found at Y6.

Heterohexamer; disulfide linked. Contains 2 sets of 3 non-identical chains (alpha, beta and gamma). The 2 heterotrimers are in head to head conformation with the N-termini in a small central domain. Post-translationally, conversion of fibrinogen to fibrin is triggered by thrombin, which cleaves fibrinopeptides A and B from alpha and beta chains, and thus exposes the N-terminal polymerization sites responsible for the formation of the soft clot.

It localises to the secreted. Its function is as follows. Cleaved by the protease thrombin to yield monomers which, together with fibrinogen alpha (FGA) and fibrinogen gamma (FGG), polymerize to form an insoluble fibrin matrix. Fibrin has a major function in hemostasis as one of the primary components of blood clots. In addition, functions during the early stages of wound repair to stabilize the lesion and guide cell migration during re-epithelialization. Was originally thought to be essential for platelet aggregation, based on in vitro studies using anticoagulated blood. However subsequent studies have shown that it is not absolutely required for thrombus formation in vivo. Enhances expression of SELP in activated platelets. Maternal fibrinogen is essential for successful pregnancy. Fibrin deposition is also associated with infection, where it protects against IFNG-mediated hemorrhage. May also facilitate the antibacterial immune response via both innate and T-cell mediated pathways. The chain is Fibrinogen beta chain (FGB) from Rangifer tarandus (Reindeer).